The following is a 215-amino-acid chain: Pyridoxine/pyridoxamine 5'-phosphate oxidase (215 aa).

Substrate contacts are provided by residues 11-14 (RRDY) and Lys69. Residues 64-69 (RVVLLK), 79-80 (YT), Lys86, and Gln108 contribute to the FMN site. Tyr126, Arg130, and Ser134 together coordinate substrate. FMN contacts are provided by residues 143-144 (QS) and Trp188. 194–196 (RLH) serves as a coordination point for substrate. An FMN-binding site is contributed by Arg198.

It belongs to the pyridoxamine 5'-phosphate oxidase family. In terms of assembly, homodimer. Requires FMN as cofactor.

It catalyses the reaction pyridoxamine 5'-phosphate + O2 + H2O = pyridoxal 5'-phosphate + H2O2 + NH4(+). It carries out the reaction pyridoxine 5'-phosphate + O2 = pyridoxal 5'-phosphate + H2O2. The protein operates within cofactor metabolism; pyridoxal 5'-phosphate salvage; pyridoxal 5'-phosphate from pyridoxamine 5'-phosphate: step 1/1. Its pathway is cofactor metabolism; pyridoxal 5'-phosphate salvage; pyridoxal 5'-phosphate from pyridoxine 5'-phosphate: step 1/1. Functionally, catalyzes the oxidation of either pyridoxine 5'-phosphate (PNP) or pyridoxamine 5'-phosphate (PMP) into pyridoxal 5'-phosphate (PLP). The chain is Pyridoxine/pyridoxamine 5'-phosphate oxidase from Legionella pneumophila (strain Paris).